A 249-amino-acid polypeptide reads, in one-letter code: ATP synthase subunit a 1 (249 aa).

The next 6 membrane-spanning stretches (helical) occupy residues 26 to 46, 84 to 104, 114 to 134, 143 to 163, 193 to 213, and 216 to 236; these read FTNV…FLYL, FFPF…LGLF, IIVT…YGFF, LFVP…IEII, FVVS…LPLI, and VAIT…FTVL.

Belongs to the ATPase A chain family. F-type ATPases have 2 components, CF(1) - the catalytic core - and CF(0) - the membrane proton channel. CF(1) has five subunits: alpha(3), beta(3), gamma(1), delta(1), epsilon(1). CF(0) has three main subunits: a(1), b(2) and c(9-12). The alpha and beta chains form an alternating ring which encloses part of the gamma chain. CF(1) is attached to CF(0) by a central stalk formed by the gamma and epsilon chains, while a peripheral stalk is formed by the delta and b chains.

Its subcellular location is the cell inner membrane. Its function is as follows. Key component of the proton channel; it plays a direct role in the translocation of protons across the membrane. In Brucella anthropi (strain ATCC 49188 / DSM 6882 / CCUG 24695 / JCM 21032 / LMG 3331 / NBRC 15819 / NCTC 12168 / Alc 37) (Ochrobactrum anthropi), this protein is ATP synthase subunit a 1.